The following is a 154-amino-acid chain: 6,7-dimethyl-8-ribityllumazine synthase (154 aa).

Residues F22, 56–58, and 80–82 contribute to the 5-amino-6-(D-ribitylamino)uracil site; these read AFE and AVI. 85-86 contacts (2S)-2-hydroxy-3-oxobutyl phosphate; sequence AT. The active-site Proton donor is the H88. 5-amino-6-(D-ribitylamino)uracil is bound at residue F113. R127 serves as a coordination point for (2S)-2-hydroxy-3-oxobutyl phosphate.

Belongs to the DMRL synthase family. Forms an icosahedral capsid composed of 60 subunits, arranged as a dodecamer of pentamers.

It carries out the reaction (2S)-2-hydroxy-3-oxobutyl phosphate + 5-amino-6-(D-ribitylamino)uracil = 6,7-dimethyl-8-(1-D-ribityl)lumazine + phosphate + 2 H2O + H(+). It functions in the pathway cofactor biosynthesis; riboflavin biosynthesis; riboflavin from 2-hydroxy-3-oxobutyl phosphate and 5-amino-6-(D-ribitylamino)uracil: step 1/2. Catalyzes the formation of 6,7-dimethyl-8-ribityllumazine by condensation of 5-amino-6-(D-ribitylamino)uracil with 3,4-dihydroxy-2-butanone 4-phosphate. This is the penultimate step in the biosynthesis of riboflavin. The chain is 6,7-dimethyl-8-ribityllumazine synthase from Geobacillus sp. (strain WCH70).